Consider the following 114-residue polypeptide: T cell receptor beta variable 10-2 (114 aa).

The signal sequence occupies residues 1–21 (MGTRLFFYVALCLLWAGHRDA). The 93-residue stretch at 22–114 (GITQSPRYKI…TSVYFCASSE (93 aa)) folds into the Ig-like domain. A disulfide bridge connects residues Cys42 and Cys110.

Alpha-beta TR is a heterodimer composed of an alpha and beta chain; disulfide-linked. The alpha-beta TR is associated with the transmembrane signaling CD3 coreceptor proteins to form the TR-CD3 (TcR or TCR). The assembly of alpha-beta TR heterodimers with CD3 occurs in the endoplasmic reticulum where a single alpha-beta TR heterodimer associates with one CD3D-CD3E heterodimer, one CD3G-CD3E heterodimer and one CD247 homodimer forming a stable octameric structure. CD3D-CD3E and CD3G-CD3E heterodimers preferentially associate with TR alpha and TR beta chains, respectively. The association of the CD247 homodimer is the last step of TcR assembly in the endoplasmic reticulum and is required for transport to the cell surface.

The protein resides in the cell membrane. Functionally, v region of the variable domain of T cell receptor (TR) beta chain that participates in the antigen recognition. Alpha-beta T cell receptors are antigen specific receptors which are essential to the immune response and are present on the cell surface of T lymphocytes. Recognize peptide-major histocompatibility (MH) (pMH) complexes that are displayed by antigen presenting cells (APC), a prerequisite for efficient T cell adaptive immunity against pathogens. Binding of alpha-beta TR to pMH complex initiates TR-CD3 clustering on the cell surface and intracellular activation of LCK that phosphorylates the ITAM motifs of CD3G, CD3D, CD3E and CD247 enabling the recruitment of ZAP70. In turn ZAP70 phosphorylates LAT, which recruits numerous signaling molecules to form the LAT signalosome. The LAT signalosome propagates signal branching to three major signaling pathways, the calcium, the mitogen-activated protein kinase (MAPK) kinase and the nuclear factor NF-kappa-B (NF-kB) pathways, leading to the mobilization of transcription factors that are critical for gene expression and essential for T cell growth and differentiation. The T cell repertoire is generated in the thymus, by V-(D)-J rearrangement. This repertoire is then shaped by intrathymic selection events to generate a peripheral T cell pool of self-MH restricted, non-autoaggressive T cells. Post-thymic interaction of alpha-beta TR with the pMH complexes shapes TR structural and functional avidity. This chain is T cell receptor beta variable 10-2, found in Homo sapiens (Human).